Here is a 250-residue protein sequence, read N- to C-terminus: 5-oxoprolinase subunit A (250 aa).

The protein belongs to the LamB/PxpA family. As to quaternary structure, forms a complex composed of PxpA, PxpB and PxpC.

It carries out the reaction 5-oxo-L-proline + ATP + 2 H2O = L-glutamate + ADP + phosphate + H(+). Functionally, catalyzes the cleavage of 5-oxoproline to form L-glutamate coupled to the hydrolysis of ATP to ADP and inorganic phosphate. In Paraburkholderia phymatum (strain DSM 17167 / CIP 108236 / LMG 21445 / STM815) (Burkholderia phymatum), this protein is 5-oxoprolinase subunit A.